The following is a 184-amino-acid chain: Mediator of RNA polymerase II transcription subunit 30 (184 aa).

A coiled-coil region spans residues serine 136 to methionine 179.

This sequence belongs to the Mediator complex subunit 30 family. Component of the Mediator complex.

Its subcellular location is the nucleus. Component of the Mediator complex, a coactivator involved in the regulated transcription of nearly all RNA polymerase II-dependent genes. Mediator functions as a bridge to convey information from gene-specific regulatory proteins to the basal RNA polymerase II transcription machinery. Mediator is recruited to promoters by direct interactions with regulatory proteins and serves as a scaffold for the assembly of a functional preinitiation complex with RNA polymerase II and the general transcription factors. This is Mediator of RNA polymerase II transcription subunit 30 (med30) from Xenopus laevis (African clawed frog).